Consider the following 214-residue polypeptide: Ras-related protein Rab-17 (214 aa).

Position 29 is a phosphoserine (serine 29). Residues glycine 31, lysine 32, threonine 33, and threonine 50 each contribute to the GTP site. Threonine 33, threonine 50, and aspartate 73 together coordinate Mg(2+). The Switch 1 signature appears at 43 to 54; that stretch reads DFSNVLPTVGCA. Positions 75-91 match the Switch 2 motif; the sequence is AGQEKYQSVCHLYFRGA. The GTP site is built by glycine 76, asparagine 132, lysine 133, aspartate 135, and alanine 163. Residues 183–204 form a disordered region; sequence RAGDTGSSRPQEGEAVALNQEP. 2 S-geranylgeranyl cysteine lipidation sites follow: cysteine 211 and cysteine 212.

This sequence belongs to the small GTPase superfamily. Rab family. Requires Mg(2+) as cofactor. As to expression, expressed in kidney, liver, and intestine mainly by epithelial cells. Expressed in hippocampus (at protein level).

It localises to the recycling endosome membrane. Its subcellular location is the melanosome. The protein localises to the cell projection. It is found in the dendrite. It carries out the reaction GTP + H2O = GDP + phosphate + H(+). Regulated by guanine nucleotide exchange factors (GEFs) which promote the exchange of bound GDP for free GTP. Regulated by GTPase activating proteins (GAPs) which increase the GTP hydrolysis activity. Inhibited by GDP dissociation inhibitors (GDIs). The small GTPases Rab are key regulators of intracellular membrane trafficking, from the formation of transport vesicles to their fusion with membranes. Rabs cycle between an inactive GDP-bound form and an active GTP-bound form that is able to recruit to membranes different set of downstream effectors directly responsible for vesicle formation, movement, tethering and fusion. RAB17 is involved in transcytosis, the directed movement of endocytosed material through the cell and its exocytosis from the plasma membrane at the opposite side. Mainly observed in epithelial cells, transcytosis mediates, for instance, the transcellular transport of immunoglobulins from the basolateral surface to the apical surface. Most probably controls membrane trafficking through apical recycling endosomes in a post-endocytic step of transcytosis. Required for melanosome transport and release from melanocytes, it also regulates dendrite and dendritic spine development. May also play a role in cell migration. The sequence is that of Ras-related protein Rab-17 from Mus musculus (Mouse).